Consider the following 171-residue polypeptide: Transcription factor E (171 aa).

Residues 5 to 88 (YEDPFIRIAV…RWRSRREEVE (84 aa)) form the HTH TFE/IIEalpha-type domain.

Belongs to the TFE family. Monomer. Interaction with RNA polymerase subunits RpoF and RpoE is necessary for Tfe stimulatory transcription activity. Able to interact with Tbp and RNA polymerase in the absence of DNA promoter. Interacts both with the preinitiation and elongation complexes.

Its function is as follows. Transcription factor that plays a role in the activation of archaeal genes transcribed by RNA polymerase. Facilitates transcription initiation by enhancing TATA-box recognition by TATA-box-binding protein (Tbp), and transcription factor B (Tfb) and RNA polymerase recruitment. Not absolutely required for transcription in vitro, but particularly important in cases where Tbp or Tfb function is not optimal. It dynamically alters the nucleic acid-binding properties of RNA polymerases by stabilizing the initiation complex and destabilizing elongation complexes. Seems to translocate with the RNA polymerase following initiation and acts by binding to the non template strand of the transcription bubble in elongation complexes. This Cenarchaeum symbiosum (strain A) protein is Transcription factor E.